Consider the following 191-residue polypeptide: MEYFDMRKMSVNLWRNAAGETREICTFPPAKRDFYWRASIASIAANGEFSLFPGMERIVTLLEGGEMLLESADRFNHTLKPFQPFAFAADQVVKAKLTAGQMSMDFNIMTRLDVCKAKVRIAERTFTTFGSRGGVVFVINGAWQLGDKLLTTDQGACWFDGRHTLRLLQPQGKLLFSEINWLAGHSPDQVQ.

It belongs to the Ves family.

This chain is Protein Ves, found in Escherichia coli (strain K12 / MC4100 / BW2952).